The chain runs to 146 residues: Large ribosomal subunit protein uL16 (146 aa).

The protein belongs to the universal ribosomal protein uL16 family. As to quaternary structure, part of the 50S ribosomal subunit.

Its function is as follows. Binds 23S rRNA and is also seen to make contacts with the A and possibly P site tRNAs. The protein is Large ribosomal subunit protein uL16 of Lactobacillus helveticus (strain DPC 4571).